The sequence spans 172 residues: Neuropeptide-like protein nlp-8 (172 aa).

The first 26 residues, 1–26 (MSQKLLPISPLQLLFLQCLLIGFTAA), serve as a signal peptide directing secretion.

Post-translationally, may be processed by convertase egl-3.

It localises to the secreted. In terms of biological role, neuropeptide-like protein. Plays a role in behaviors associated with a sleep-like state induced by stress (SIS), acting in concert with the FARP (FMRFamide related) peptides, flp-13 and flp-24. The polypeptide is Neuropeptide-like protein nlp-8 (Caenorhabditis elegans).